Consider the following 268-residue polypeptide: Interleukin-1 alpha (268 aa).

Positions 1–112 (MAKVPDLFED…NTEEEIIKPR (112 aa)) are excised as a propeptide. Lysine 82 bears the N6-acetyllysine mark. Positions 82–86 (KKRRL) are nuclear localization signal (NLS). A Phosphoserine modification is found at serine 87. 2 N-linked (GlcNAc...) asparagine glycosylation sites follow: asparagine 102 and asparagine 141.

Belongs to the IL-1 family. As to quaternary structure, monomer. Interacts with TMED10; the interaction mediates the translocation from the cytoplasm into the ERGIC (endoplasmic reticulum-Golgi intermediate compartment) and thereby secretion. Interacts with IL1R1. Interacts with S100A13; this interaction is the first step in the export of IL1A, followed by direct translocation of this complex across the plasma membrane. In terms of processing, acetylated within its nuclear localization sequence, which impacts subcellular localization. Proteolytic processed by CAPN1 in a calcium-dependent manner. Cleavage from 31 kDa precursor to 18 kDa biologically active molecules. Post-translationally, phosphorylated. Phosphorylation greatly enhances susceptibility to digestion and promotes the conversion of pre-IL1A alpha to the biologically active IL1A.

The protein resides in the nucleus. The protein localises to the cytoplasm. It localises to the secreted. Cytokine constitutively present intracellularly in nearly all resting non-hematopoietic cells that plays an important role in inflammation and bridges the innate and adaptive immune systems. After binding to its receptor IL1R1 together with its accessory protein IL1RAP, forms the high affinity interleukin-1 receptor complex. Signaling involves the recruitment of adapter molecules such as MYD88, IRAK1 or IRAK4. In turn, mediates the activation of NF-kappa-B and the three MAPK pathways p38, p42/p44 and JNK pathways. Within the cell, acts as an alarmin and cell death results in its liberation in the extracellular space after disruption of the cell membrane to induce inflammation and alert the host to injury or damage. In addition to its role as a danger signal, which occurs when the cytokine is passively released by cell necrosis, directly senses DNA damage and acts as signal for genotoxic stress without loss of cell integrity. This chain is Interleukin-1 alpha (IL1A), found in Bos taurus (Bovine).